The chain runs to 365 residues: 3-dehydroquinate synthase (365 aa).

Residues 106–110 (GVIGD), 130–131 (TT), Lys142, Lys151, and 169–172 (FFAT) contribute to the NAD(+) site. 3 residues coordinate Zn(2+): Glu184, His247, and His264.

This sequence belongs to the sugar phosphate cyclases superfamily. Dehydroquinate synthase family. NAD(+) is required as a cofactor. Co(2+) serves as cofactor. The cofactor is Zn(2+).

It is found in the cytoplasm. The enzyme catalyses 7-phospho-2-dehydro-3-deoxy-D-arabino-heptonate = 3-dehydroquinate + phosphate. Its pathway is metabolic intermediate biosynthesis; chorismate biosynthesis; chorismate from D-erythrose 4-phosphate and phosphoenolpyruvate: step 2/7. Its function is as follows. Catalyzes the conversion of 3-deoxy-D-arabino-heptulosonate 7-phosphate (DAHP) to dehydroquinate (DHQ). This chain is 3-dehydroquinate synthase, found in Listeria monocytogenes serotype 4b (strain F2365).